Reading from the N-terminus, the 301-residue chain is Homeobox protein knotted-1-like 1 (301 aa).

The segment at 141-170 (CSGATSPPATTATHSDEMVGSSDEDQCSGE) is disordered. Residues 144–153 (ATSPPATTAT) are compositionally biased toward low complexity. An ELK domain is found at 188–208 (ELKEMLLKKYSGCLSRLRSEF). Positions 209 to 272 (LKKRKKGKLP…NQRKRHWKPS (64 aa)) form a DNA-binding region, homeobox; TALE-type.

It belongs to the TALE/KNOX homeobox family.

It is found in the nucleus. Functionally, probable transcription factor that may be involved in shoot formation during early embryogenesis. This is Homeobox protein knotted-1-like 1 (OSH6) from Oryza sativa subsp. japonica (Rice).